A 734-amino-acid chain; its full sequence is Polyribonucleotide nucleotidyltransferase (734 aa).

Mg(2+) is bound by residues aspartate 497 and aspartate 503. One can recognise a KH domain in the interval 564-623; that stretch reads PRIIHITIDPDKIRDVIGPGGKVIKKIVEETGAEIDIEDDGRVFIAAVDQEKGRKAQEII. An S1 motif domain is found at 633–707; that stretch reads GEIYTGRVTR…SQGRLKLSKK (75 aa). A disordered region spans residues 700–734; it reads GRLKLSKKEATPPPESTAMKEGRAHRPSRRRESAR. The segment covering 717–734 has biased composition (basic and acidic residues); the sequence is AMKEGRAHRPSRRRESAR.

This sequence belongs to the polyribonucleotide nucleotidyltransferase family. Mg(2+) serves as cofactor.

It is found in the cytoplasm. The enzyme catalyses RNA(n+1) + phosphate = RNA(n) + a ribonucleoside 5'-diphosphate. In terms of biological role, involved in mRNA degradation. Catalyzes the phosphorolysis of single-stranded polyribonucleotides processively in the 3'- to 5'-direction. This chain is Polyribonucleotide nucleotidyltransferase, found in Pelotomaculum thermopropionicum (strain DSM 13744 / JCM 10971 / SI).